Reading from the N-terminus, the 234-residue chain is MKLLLLLALLVGAVSTRHLNVDTSSLQSLQGEESLAQDGETAEGATREAASGVLMPLREEVKEEMEGGSGSEDDPEEEEEEKEMESSSELDMGPEDVQCPKEEDIVKFEGSPGCKICRYVVLSVPKTFKQAQSVCQRCFRGNLASIHSYNINLQVQRSSRILNVAQVWIGGQLRGKGHHKHFHWVDGTLWNFWYWAAGQPWRGNNSGRCVTLCARGGHWRRSHCGVRRAFSCSY.

Residues 1-15 (MKLLLLLALLVGAVS) form the signal peptide. A propeptide spans 16–115 (TRHLNVDTSS…VKFEGSPGCK (100 aa)) (acidic). The disordered stretch occupies residues 26–96 (LQSLQGEESL…SSELDMGPED (71 aa)). A glycan (O-linked (Xyl...) (glycosaminoglycan) serine) is linked at S69. Over residues 71–94 (SEDDPEEEEEEKEMESSSELDMGP) the composition is skewed to acidic residues. A C-type lectin domain is found at 133 to 234 (SVCQRCFRGN…GVRRAFSCSY (102 aa)). Cystine bridges form between C135–C232 and C209–C224.

In terms of processing, nitrated.

The protein resides in the cytoplasmic granule. In terms of biological role, MBP may play some important roles in the allergic reactions and inflammations, since MBP is capable of releasing histamine from mast cells and damaging the epithelial cells of bronchial tubes. Antiparasitic and antibiotic. This Cavia porcellus (Guinea pig) protein is Eosinophil granule major basic protein 2 (MBP2).